A 167-amino-acid polypeptide reads, in one-letter code: ATP synthase subunit b (167 aa).

A helical membrane pass occupies residues 10-30; sequence TFFFQLANTLIMFLILKHFLF.

Belongs to the ATPase B chain family. As to quaternary structure, F-type ATPases have 2 components, F(1) - the catalytic core - and F(0) - the membrane proton channel. F(1) has five subunits: alpha(3), beta(3), gamma(1), delta(1), epsilon(1). F(0) has three main subunits: a(1), b(2) and c(10-14). The alpha and beta chains form an alternating ring which encloses part of the gamma chain. F(1) is attached to F(0) by a central stalk formed by the gamma and epsilon chains, while a peripheral stalk is formed by the delta and b chains.

It localises to the cell membrane. Functionally, f(1)F(0) ATP synthase produces ATP from ADP in the presence of a proton or sodium gradient. F-type ATPases consist of two structural domains, F(1) containing the extramembraneous catalytic core and F(0) containing the membrane proton channel, linked together by a central stalk and a peripheral stalk. During catalysis, ATP synthesis in the catalytic domain of F(1) is coupled via a rotary mechanism of the central stalk subunits to proton translocation. In terms of biological role, component of the F(0) channel, it forms part of the peripheral stalk, linking F(1) to F(0). This chain is ATP synthase subunit b, found in Alkaliphilus oremlandii (strain OhILAs) (Clostridium oremlandii (strain OhILAs)).